The primary structure comprises 154 residues: uncharacterized protein (154 aa).

The transit peptide at 1–42 (MLRVIWKHSSRVTRSIELSNISTTNHTRSLRRLSWISPRRFY) directs the protein to the mitochondrion.

It localises to the mitochondrion. This is an uncharacterized protein from Saccharomyces cerevisiae (strain ATCC 204508 / S288c) (Baker's yeast).